The following is a 521-amino-acid chain: Vascular endothelial zinc finger 1 (521 aa).

The C2H2-type 1 zinc finger occupies 74–96 (FVCTYCSKAFRDSYHLRRHESCH). The segment covering 140–155 (TTSSSGTNPSSSASTT) has biased composition (low complexity). A disordered region spans residues 140–167 (TTSSSGTNPSSSASTTAMPVTQSVKKPS). C2H2-type zinc fingers lie at residues 174 to 196 (HACEMCGKAFRDVYHLNRHKLSH), 202 to 224 (FECPICNQRFKRKDRMTYHVRSH), 232 to 255 (YTCSVCGKGFSRPDHLSCHVKHVH), 261 to 283 (FKCQTCTAAFATKDRLRTHMVRH), and 287 to 308 (VSCNICGKLLSAAYITSHLKTH). Lysine 362 carries the N6-acetyllysine modification. A run of 4 repeats spans residues 394–400 (PVTLTTP), 445–451 (PVTITSP), 457–463 (PLTLTTP), and 479–485 (PVTITSP). Residues 394–485 (PVTLTTPFSI…IAHPVTITSP (92 aa)) are 4 X 7 AA repeats of P-[LV]-T-[IL]-T-[ST]-P.

This sequence belongs to the krueppel C2H2-type zinc-finger protein family. In terms of assembly, interacts with ARHGAP22. In terms of tissue distribution, ubiquitously expressed. Highest levels in skeletal muscle and kidney.

The protein resides in the nucleus. Functionally, possible transcription factor. Specifically binds to the CT/GC-rich region of the interleukin-3 promoter and mediates tax transactivation of IL-3. This chain is Vascular endothelial zinc finger 1 (VEZF1), found in Homo sapiens (Human).